The following is a 98-amino-acid chain: Integration host factor subunit alpha (98 aa).

Residues 52–71 form a disordered region; that stretch reads FDLRDKNQRPGRNPKTGEDI.

Belongs to the bacterial histone-like protein family. As to quaternary structure, heterodimer of an alpha and a beta chain.

Its function is as follows. This protein is one of the two subunits of integration host factor, a specific DNA-binding protein that functions in genetic recombination as well as in transcriptional and translational control. The polypeptide is Integration host factor subunit alpha (Photorhabdus laumondii subsp. laumondii (strain DSM 15139 / CIP 105565 / TT01) (Photorhabdus luminescens subsp. laumondii)).